Here is a 132-residue protein sequence, read N- to C-terminus: Secreted RxLR effector protein RXLR-C22 (132 aa).

The first 21 residues, methionine 1–alanine 21, serve as a signal peptide directing secretion. The short motif at arginine 56–arginine 74 is the RxLR-dEER element. N-linked (GlcNAc...) asparagine glycosylation occurs at asparagine 116.

The protein belongs to the RxLR effector family.

The protein localises to the secreted. It is found in the host Golgi apparatus. In terms of biological role, secreted effector that does not suppress pattern-triggered immunity (PTI) in plant host. The polypeptide is Secreted RxLR effector protein RXLR-C22 (Plasmopara halstedii (Downy mildew of sunflower)).